The chain runs to 774 residues: Effector protein hopW1-1 (774 aa).

2 disordered regions span residues 1–33 (MSPAQIIRTPHSFPPSFTGTSSSAENSHAQSPQ) and 301–340 (CQAGGNGQGQLEASSARPESLRYAPTRAASSGSEARVPGQ). Residues 9–23 (TPHSFPPSFTGTSSS) show a composition bias toward low complexity. Positions 24–33 (AENSHAQSPQ) are enriched in polar residues.

Belongs to the HopW family. In terms of assembly, interacts (via C-terminus) with Arabidopsis WIN1, WIN2 and WIN3.

The protein resides in the secreted. In terms of biological role, induces hypersensitive response (HR). This chain is Effector protein hopW1-1 (hopW1-1), found in Pseudomonas syringae pv. maculicola.